Here is a 359-residue protein sequence, read N- to C-terminus: Short chain dehydrogenase resG (359 aa).

Residues lysine 87, aspartate 110, asparagine 137, tyrosine 237, and lysine 241 each contribute to the NADP(+) site. Residue tyrosine 237 is the Proton donor of the active site. The Lowers pKa of active site Tyr role is filled by lysine 241.

It belongs to the short-chain dehydrogenases/reductases (SDR) family.

It functions in the pathway antifungal biosynthesis. In terms of biological role, short chain dehydrogenase; part of the gene cluster that mediates the biosynthesis of the tetrahydropyranyl antifungal agent restricticin that acts as an inhibitor of CYP51 and blocks the ergosterol biosynthesis. The highly reducing polyketide synthase resH, the short chain dehydrogenase resG, the cyclase resF, the FAD-dependent monooxygenase resA and the enoylreductase resD are required to generate the first stable intermediate desmethylrestrictinol. ResH with resD biosynthesize the first polyketide chain intermediate that is reduced by resG, followed by epoxidation by resA before 6-endo cyclization via epoxide opening by resF leads to desmethylrestrictinol. The methyltransferase resE then catalyzes the C4 O-methylation of desmethylrestrictinol to produce restrictinol, and the nonribosomal peptide synthetase resC catalyzes the C3 esterification of restrictinol with glycine that leads to restricticin. The sequence is that of Short chain dehydrogenase resG from Aspergillus sclerotiorum.